The primary structure comprises 537 residues: Protein pns1 (537 aa).

Positions Met-1–Gly-16 are enriched in polar residues. Residues Met-1–Asn-35 form a disordered region. Topologically, residues Met-1–Asp-81 are cytoplasmic. The span at Gln-23 to Asn-35 shows a compositional bias: low complexity. A helical transmembrane segment spans residues Ile-82–Ala-102. The Extracellular portion of the chain corresponds to Ile-103 to Thr-130. Residues Leu-131–Gly-151 form a helical membrane-spanning segment. The Cytoplasmic portion of the chain corresponds to Ala-152 to Leu-158. The chain crosses the membrane as a helical span at residues Phe-159–Ile-179. At Ala-180–Tyr-184 the chain is on the extracellular side. A helical transmembrane segment spans residues Gly-185–Ile-205. At Pro-206 to His-227 the chain is on the cytoplasmic side. Residues Met-228 to Val-248 form a helical membrane-spanning segment. Residues Thr-249 to Arg-275 are Extracellular-facing. A helical membrane pass occupies residues Ala-276–Leu-296. Topologically, residues Lys-297–Ala-333 are cytoplasmic. The chain crosses the membrane as a helical span at residues Thr-334–Leu-354. At Arg-355–Ser-370 the chain is on the extracellular side. A helical transmembrane segment spans residues Ile-371–Val-391. Topologically, residues Thr-392–Cys-432 are cytoplasmic. Residues Leu-433–Ala-453 traverse the membrane as a helical segment. The Extracellular portion of the chain corresponds to Tyr-454–Asn-469. The N-linked (GlcNAc...) asparagine glycan is linked to Asn-469. Residues Phe-470–Met-490 form a helical membrane-spanning segment. Residues Thr-491 to Ala-537 are Cytoplasmic-facing.

This sequence belongs to the CTL (choline transporter-like) family.

The protein resides in the cell membrane. In terms of biological role, probably involved in transport through the plasma membrane. This chain is Protein pns1 (pns1), found in Aspergillus fumigatus (strain ATCC MYA-4609 / CBS 101355 / FGSC A1100 / Af293) (Neosartorya fumigata).